Here is a 176-residue protein sequence, read N- to C-terminus: T cell receptor beta constant 1 (176 aa).

An Ig-like C1-type domain is found at 8-117 (PEVAVFEPSE…WTQDRAKPVT (110 aa)). Cysteines 30 and 95 form a disulfide. An N-linked (GlcNAc...) asparagine glycan is attached at N69. Residues 130 to 144 (CGFTSVSYQQGVLSA) form a connecting peptide region. The chain crosses the membrane as a helical span at residues 150–170 (ILLGKATLYAVLVSALVLMAM). Residues 171 to 176 (VKRKDF) lie on the Cytoplasmic side of the membrane.

In terms of assembly, alpha-beta TR is a heterodimer composed of an alpha and beta chain; disulfide-linked. The alpha-beta TR is associated with the transmembrane signaling CD3 coreceptor proteins to form the TR-CD3 (TcR or TCR). The assembly of alpha-beta TR heterodimers with CD3 occurs in the endoplasmic reticulum where a single alpha-beta TR heterodimer associates with one CD3D-CD3E heterodimer, one CD3G-CD3E heterodimer and one CD247 homodimer forming a stable octameric structure. CD3D-CD3E and CD3G-CD3E heterodimers preferentially associate with TR alpha and TR beta chains, respectively. The association of the CD247 homodimer is the last step of TcR assembly in the endoplasmic reticulum and is required for transport to the cell surface.

The protein localises to the cell membrane. Functionally, constant region of T cell receptor (TR) beta chain. Alpha-beta T cell receptors are antigen specific receptors which are essential to the immune response and are present on the cell surface of T lymphocytes. Recognize peptide-major histocompatibility (MH) (pMH) complexes that are displayed by antigen presenting cells (APC), a prerequisite for efficient T cell adaptive immunity against pathogens. Binding of alpha-beta TR to pMH complex initiates TR-CD3 clustering on the cell surface and intracellular activation of LCK that phosphorylates the ITAM motifs of CD3G, CD3D, CD3E and CD247 enabling the recruitment of ZAP70. In turn, ZAP70 phosphorylates LAT, which recruits numerous signaling molecules to form the LAT signalosome. The LAT signalosome propagates signal branching to three major signaling pathways, the calcium, the mitogen-activated protein kinase (MAPK) kinase and the nuclear factor NF-kappa-B (NF-kB) pathways, leading to the mobilization of transcription factors that are critical for gene expression and essential for T cell growth and differentiation. The T cell repertoire is generated in the thymus, by V-(D)-J rearrangement. This repertoire is then shaped by intrathymic selection events to generate a peripheral T cell pool of self-MH restricted, non-autoaggressive T cells. Post-thymic interaction of alpha-beta TR with the pMH complexes shapes TR structural and functional avidity. This Homo sapiens (Human) protein is T cell receptor beta constant 1.